A 417-amino-acid polypeptide reads, in one-letter code: S-inosyl-L-homocysteine hydrolase (417 aa).

Substrate-binding residues include Asp-124 and Glu-149. Residue 150-152 participates in NAD(+) binding; that stretch reads TTT. Positions 179 and 183 each coordinate substrate. NAD(+) contacts are provided by residues Asn-184, 213-218, Glu-236, Asn-271, 292-294, and Asn-339; these read GYGWCG and SGH.

Belongs to the adenosylhomocysteinase family. It depends on NAD(+) as a cofactor.

The protein localises to the cytoplasm. The catalysed reaction is S-inosyl-L-homocysteine + H2O = L-homocysteine + inosine. The protein operates within amino-acid biosynthesis; S-adenosyl-L-methionine biosynthesis. In terms of biological role, catalyzes the hydrolysis of S-inosyl-L-homocysteine (SIH) to L-homocysteine (Hcy) and inosine. Likely functions in a S-adenosyl-L-methionine (SAM) recycling pathway from S-adenosyl-L-homocysteine (SAH) produced from SAM-dependent methylation reactions. Can also catalyze the reverse reaction in vitro, i.e. the synthesis of SIH from Hcy and inosine. This Methanothermobacter thermautotrophicus (strain ATCC 29096 / DSM 1053 / JCM 10044 / NBRC 100330 / Delta H) (Methanobacterium thermoautotrophicum) protein is S-inosyl-L-homocysteine hydrolase.